A 97-amino-acid polypeptide reads, in one-letter code: Secreted Ly-6/uPAR domain-containing protein 2 (97 aa).

An N-terminal signal peptide occupies residues 1-22 (MQLGTGLLLAAVLSLQLAAAEA). 5 disulfide bridges follow: Cys-25–Cys-47, Cys-28–Cys-34, Cys-40–Cys-68, Cys-72–Cys-88, and Cys-89–Cys-94. Residues 25–95 (CHQCTGFGGC…IACCQTSLCN (71 aa)) enclose the UPAR/Ly6 domain.

Interacts with CHRNA3, CHRNA4, CHRNA5, CHRNA7, CHRNB2 and CHRNB4. Interacts with CHRM1 and CHRM3 probably in an allosteric manner. In terms of tissue distribution, expressed at highest levels in cervix and esophagus, followed by adult and fetal skin. Expressed at lower levels in brain, lung, stomach, small intestine, colon, rectum, uterus, and thymus. Not detected in spleen nor bone marrow. Up-regulated 3-fold in psoriatic lesional skin. In the epidermis, predominantly produced by keratinocytes of the suprabasal epidermal compartment (at protein level). In attached gingiva, produced at highest levels by basal cells located in the lowermost epithelial layers (at protein level). Detected in serum (at protein level).

It is found in the secreted. In terms of biological role, binds and may modulate the functional properties of nicotinic and muscarinic acetylcholine receptors. May regulate keratinocytes proliferation, differentiation and apoptosis. In vitro moderately inhibits ACh-evoked currents of alpha-3:beta-2-containing nAChRs and strongly these of alpha-4:beta-2-containing nAChRs, modulates alpha-7-containing nAChRs, and inhibits nicotine-induced signaling probably implicating alpha-3:beta-4-containing nAChRs. Proposed to act on alpha-3:beta-2 and alpha-7 nAChRs in an orthosteric, and on mAChRs, such as CHRM1 and CHRM3, in an allosteric manner. This Homo sapiens (Human) protein is Secreted Ly-6/uPAR domain-containing protein 2.